Consider the following 258-residue polypeptide: Acetylglutamate kinase (258 aa).

Residues 44–45, arginine 66, and asparagine 158 contribute to the substrate site; that span reads GG. ATP contacts are provided by residues 181–186 and 209–211; these read DVSGIL and IIT.

It belongs to the acetylglutamate kinase family. ArgB subfamily. As to quaternary structure, homodimer.

The protein localises to the cytoplasm. It catalyses the reaction N-acetyl-L-glutamate + ATP = N-acetyl-L-glutamyl 5-phosphate + ADP. Its pathway is amino-acid biosynthesis; L-arginine biosynthesis; N(2)-acetyl-L-ornithine from L-glutamate: step 2/4. In terms of biological role, catalyzes the ATP-dependent phosphorylation of N-acetyl-L-glutamate. In Escherichia coli O6:K15:H31 (strain 536 / UPEC), this protein is Acetylglutamate kinase.